Reading from the N-terminus, the 271-residue chain is Thermoregulatory protein LcrF (271 aa).

One can recognise an HTH araC/xylS-type domain in the interval 167-265 (ERLQKFMEEN…GCTPSQARLT (99 aa)). DNA-binding regions (H-T-H motif) lie at residues 184-205 (SKFA…GTVY) and 232-255 (IVDI…RRRF).

Transcriptional activator of the thermally regulated virulent yopE gene. LcrF activity could be modulated by the interaction with an inducer molecule serving as a temperature messenger. The availability of the messenger would in turn be controlled by a temperature-responsive process serving as a cellular thermometer. In Yersinia pestis, this protein is Thermoregulatory protein LcrF (lcrF).